The following is a 260-amino-acid chain: UPF0246 protein APJL_0596 (260 aa).

This sequence belongs to the UPF0246 family.

The protein is UPF0246 protein APJL_0596 of Actinobacillus pleuropneumoniae serotype 3 (strain JL03).